We begin with the raw amino-acid sequence, 253 residues long: (S)-2-haloacid dehalogenase (253 aa).

The active-site Nucleophile is the D8. Residues 9 to 10 (AY), R39, and 114 to 115 (SN) each bind an (S)-2-haloacid. Residues 171 to 176 (SSNGFD) form an important for catalytic activity region.

This sequence belongs to the HAD-like hydrolase superfamily. S-2-haloalkanoic acid dehalogenase family. As to quaternary structure, homodimer.

The catalysed reaction is an (S)-2-haloacid + H2O = a (2R)-2-hydroxycarboxylate + a halide anion + H(+). The enzyme catalyses (S)-2-chloropropanoate + H2O = (R)-lactate + chloride + H(+). Functionally, catalyzes the hydrolytic dehalogenation of small (S)-2-haloalkanoic acids to yield the corresponding (R)-2-hydroxyalkanoic acids. Acts on acids of short chain lengths, C(2) to C(4), with inversion of configuration at C-2. Active with 2-halogenated carboxylic acids and converts only the S-isomer (or L-isomer) of 2-chloropropionic acid with inversion of configuration to produce R-lactate (or D-isomer). The sequence is that of (S)-2-haloacid dehalogenase from Xanthobacter autotrophicus.